A 256-amino-acid polypeptide reads, in one-letter code: 5-oxoprolinase subunit A 1 (256 aa).

Belongs to the LamB/PxpA family. As to quaternary structure, forms a complex composed of PxpA, PxpB and PxpC.

The catalysed reaction is 5-oxo-L-proline + ATP + 2 H2O = L-glutamate + ADP + phosphate + H(+). Its function is as follows. Catalyzes the cleavage of 5-oxoproline to form L-glutamate coupled to the hydrolysis of ATP to ADP and inorganic phosphate. The polypeptide is 5-oxoprolinase subunit A 1 (Pseudomonas syringae pv. tomato (strain ATCC BAA-871 / DC3000)).